We begin with the raw amino-acid sequence, 449 residues long: Signal recognition particle protein (449 aa).

GTP-binding positions include 109 to 116 (GLQGSGKT), 191 to 195 (DTAGR), and 249 to 252 (SRID).

Belongs to the GTP-binding SRP family. SRP54 subfamily. In terms of assembly, part of the signal recognition particle protein translocation system, which is composed of SRP and FtsY. SRP is a ribonucleoprotein composed of Ffh and a 4.5S RNA molecule.

It is found in the cytoplasm. The catalysed reaction is GTP + H2O = GDP + phosphate + H(+). Its function is as follows. Involved in targeting and insertion of nascent membrane proteins into the cytoplasmic membrane. Binds to the hydrophobic signal sequence of the ribosome-nascent chain (RNC) as it emerges from the ribosomes. The SRP-RNC complex is then targeted to the cytoplasmic membrane where it interacts with the SRP receptor FtsY. Interaction with FtsY leads to the transfer of the RNC complex to the Sec translocase for insertion into the membrane, the hydrolysis of GTP by both Ffh and FtsY, and the dissociation of the SRP-FtsY complex into the individual components. This chain is Signal recognition particle protein, found in Rickettsia conorii (strain ATCC VR-613 / Malish 7).